The sequence spans 60 residues: Potassium channel toxin alpha-KTx 12.5 (60 aa).

Positions 1–22 (MNKLPILIFMLLVCSMFISSDC) are cleaved as a signal peptide. 3 disulfide bridges follow: Cys30–Cys51, Cys36–Cys56, and Cys40–Cys58.

The protein belongs to the short scorpion toxin superfamily. Potassium channel inhibitor family. Alpha-KTx 12 subfamily. In terms of tissue distribution, expressed by the venom gland.

The protein localises to the secreted. Its function is as follows. This recombinant toxin inhibits the mammalian voltage-gated potassium channels Kv1.3/KCNA3 (IC(50)=28 nM). Kv1.1/KCNA1 and Kv1.2/KCNA2 potassium channels are also weakly inhibited (IC(50)=1.73 uM and IC(50)=12.63 uM, respectively). The sequence is that of Potassium channel toxin alpha-KTx 12.5 from Lychas mucronatus (Chinese swimming scorpion).